A 154-amino-acid chain; its full sequence is Prefoldin subunit alpha (154 aa).

Belongs to the prefoldin alpha subunit family. Heterohexamer of two alpha and four beta subunits.

It is found in the cytoplasm. Its function is as follows. Molecular chaperone capable of stabilizing a range of proteins. Seems to fulfill an ATP-independent, HSP70-like function in archaeal de novo protein folding. The polypeptide is Prefoldin subunit alpha (Hyperthermus butylicus (strain DSM 5456 / JCM 9403 / PLM1-5)).